Reading from the N-terminus, the 1342-residue chain is DNA-directed RNA polymerase subunit beta (1342 aa).

The protein belongs to the RNA polymerase beta chain family. As to quaternary structure, the RNAP catalytic core consists of 2 alpha, 1 beta, 1 beta' and 1 omega subunit. When a sigma factor is associated with the core the holoenzyme is formed, which can initiate transcription.

It catalyses the reaction RNA(n) + a ribonucleoside 5'-triphosphate = RNA(n+1) + diphosphate. Its function is as follows. DNA-dependent RNA polymerase catalyzes the transcription of DNA into RNA using the four ribonucleoside triphosphates as substrates. The protein is DNA-directed RNA polymerase subunit beta of Vibrio vulnificus (strain CMCP6).